The chain runs to 208 residues: Small ribosomal subunit protein eS8 (208 aa).

The tract at residues 1–34 (MGISRDHWHKRRATGGKRAPIRKKRKYELGRPAA) is disordered. Residues 7–26 (HWHKRRATGGKRAPIRKKRK) show a composition bias toward basic residues.

Belongs to the eukaryotic ribosomal protein eS8 family. As to quaternary structure, component of the small ribosomal subunit. Identified in a IGF2BP1-dependent mRNP granule complex containing untranslated mRNAs. Part of the small subunit (SSU) processome, composed of more than 70 proteins and the RNA chaperone small nucleolar RNA (snoRNA) U3.

Its subcellular location is the cytoplasm. The protein resides in the membrane. The protein localises to the nucleus. It is found in the nucleolus. Functionally, component of the small ribosomal subunit. The ribosome is a large ribonucleoprotein complex responsible for the synthesis of proteins in the cell. Part of the small subunit (SSU) processome, first precursor of the small eukaryotic ribosomal subunit. During the assembly of the SSU processome in the nucleolus, many ribosome biogenesis factors, an RNA chaperone and ribosomal proteins associate with the nascent pre-rRNA and work in concert to generate RNA folding, modifications, rearrangements and cleavage as well as targeted degradation of pre-ribosomal RNA by the RNA exosome. The polypeptide is Small ribosomal subunit protein eS8 (RpS8) (Spodoptera frugiperda (Fall armyworm)).